A 512-amino-acid polypeptide reads, in one-letter code: Probable multidrug resistance protein EmrY (512 aa).

Over 1–8 (MAITKSTP) the chain is Cytoplasmic. The chain crosses the membrane as a helical span at residues 9–29 (APLTGGTLWCVTIALSLATFM). Gln-30 is a topological domain (periplasmic). The helical transmembrane segment at 31–51 (MLDSTISNVAIPTISGFLGAS) threads the bilayer. Residues 52-53 (TD) are Cytoplasmic-facing. A helical membrane pass occupies residues 54-74 (EGTWVITSFGVANAIAIPVTG). Residues 75-84 (RLAQRIGELR) are Periplasmic-facing. 2 helical membrane-spanning segments follow: residues 85-105 (LFLLSVTFFSLSSLMCSLSTN) and 106-126 (LDVLIFFRVVQGLMAGPLIPL). Over 127–141 (SQSLLLRNYPPEKRT) the chain is Periplasmic. The helical transmembrane segment at 142–162 (FALALWSMTVIIAPICGPILG) threads the bilayer. At 163-172 (GYICDNFSWG) the chain is on the cytoplasmic side. The chain crosses the membrane as a helical span at residues 173 to 193 (WIFLINVPMGIIVLTLCLTLL). Over 194-204 (KGRETETSPVK) the chain is Periplasmic. Residues 205 to 225 (MNLPGLTLLVLGVGGLQIMLD) form a helical membrane-spanning segment. Over 226 to 234 (KGRDLDWFN) the chain is Cytoplasmic. The chain crosses the membrane as a helical span at residues 235–255 (SSTIIILTVVSVISLISLVIW). The Periplasmic portion of the chain corresponds to 256–273 (ESTSENPILDLSLFKSRN). Residues 274–294 (FTIGIVSITCAYLFYSGAIVL) traverse the membrane as a helical segment. Residues 295-307 (MPQLLQETMGYNA) are Cytoplasmic-facing. Residues 308–328 (IWAGLAYAPIGIMPLLISPLI) form a helical membrane-spanning segment. Over 329–338 (GRYGNKIDMR) the chain is Periplasmic. Residues 339–359 (LLVTFSFLMYAVCYYWRSVTF) form a helical membrane-spanning segment. Residues 360–364 (MPTID) are Cytoplasmic-facing. A helical transmembrane segment spans residues 365 to 385 (FTGIILPQFFQGFAVACFFLP). Over 386–486 (LTTISFSGLP…LSISANEIFR (101 aa)) the chain is Periplasmic. Residues 487–507 (MAAIAFILLTVLVWFAKPPFT) form a helical membrane-spanning segment. The Cytoplasmic portion of the chain corresponds to 508-512 (AKGVG).

Belongs to the major facilitator superfamily. EmrB family. Part of the tripartite efflux system EmrYK-TolC, which is composed of an inner membrane transporter, EmrY, a membrane fusion protein, EmrK, and an outer membrane component, TolC. The complex forms a large protein conduit and can translocate molecules across both the inner and outer membranes.

It localises to the cell inner membrane. In terms of biological role, part of the tripartite efflux system EmrYK-TolC, which confers resistance to various drugs. This is Probable multidrug resistance protein EmrY (emrY) from Escherichia coli (strain K12).